The primary structure comprises 507 residues: 3-[(3aS,4S,7aS)-7a-methyl-1,5-dioxo-octahydro-1H-inden-4-yl]propanoyl:CoA ligase (507 aa).

Residues 177-185 (TSGTTGRSK), Asp-391, Arg-406, and Lys-497 each bind ATP.

Belongs to the ATP-dependent AMP-binding enzyme family.

It catalyses the reaction 3-[(3aS,4S,7aS)-7a-methyl-1,5-dioxo-octahydro-1H-inden-4-yl]propanoate + ATP + CoA = 3-[(3aS,4S,7aS)-7a-methyl-1,5-dioxo-octahydro-1H-inden-4-yl]propanoyl-CoA + AMP + diphosphate. It carries out the reaction 5-hydroxy-3-[(3aS,4S,5R,7aS)-7a-methyl-1,5-dioxo-octahydro-1H-inden-4-yl]propanoate + ATP + CoA = 3-[(3aS,4S,5R,7aS)-5-hydroxy-7a-methyl-1-oxo-octahydro-1H-inden-4-yl]propanoyl-CoA + AMP + diphosphate. In terms of biological role, involved in the catabolism of the rings C and D of cholesterol. Catalyzes the ATP-dependent CoA thioesterification of 3aalpha-H-4alpha(3'-propanoate)-7abeta-methylhexahydro-1,5-indanedione (HIP) to yield HIP-CoA. It can also use the hydroxylated analogs of HIP, 5alpha-OH HIP and 1beta-OH HIP. It requires that the side chain at C17 is completely removed. The sequence is that of 3-[(3aS,4S,7aS)-7a-methyl-1,5-dioxo-octahydro-1H-inden-4-yl]propanoyl:CoA ligase from Mycobacterium tuberculosis (strain ATCC 25618 / H37Rv).